The sequence spans 299 residues: ATP synthase gamma chain (299 aa).

The protein belongs to the ATPase gamma chain family. F-type ATPases have 2 components, CF(1) - the catalytic core - and CF(0) - the membrane proton channel. CF(1) has five subunits: alpha(3), beta(3), gamma(1), delta(1), epsilon(1). CF(0) has three main subunits: a, b and c.

The protein localises to the cell membrane. In terms of biological role, produces ATP from ADP in the presence of a proton gradient across the membrane. The gamma chain is believed to be important in regulating ATPase activity and the flow of protons through the CF(0) complex. The chain is ATP synthase gamma chain from Leifsonia xyli subsp. xyli (strain CTCB07).